A 446-amino-acid chain; its full sequence is Bifunctional protein GlmU (446 aa).

The segment at methionine 1–arginine 226 is pyrophosphorylase. Residues leucine 7 to glycine 10, lysine 21, glutamine 73, and glycine 78 to threonine 79 contribute to the UDP-N-acetyl-alpha-D-glucosamine site. Residue aspartate 103 participates in Mg(2+) binding. Residues glycine 140, glutamate 155, asparagine 170, and asparagine 224 each contribute to the UDP-N-acetyl-alpha-D-glucosamine site. A Mg(2+)-binding site is contributed by asparagine 224. Residues valine 227–lysine 247 are linker. Residues glycine 248–aspartate 446 are N-acetyltransferase. Positions 329 and 347 each coordinate UDP-N-acetyl-alpha-D-glucosamine. The active-site Proton acceptor is histidine 359. The UDP-N-acetyl-alpha-D-glucosamine site is built by tyrosine 362 and asparagine 373. Acetyl-CoA is bound by residues alanine 376, alanine 419, and arginine 436.

It in the N-terminal section; belongs to the N-acetylglucosamine-1-phosphate uridyltransferase family. The protein in the C-terminal section; belongs to the transferase hexapeptide repeat family. As to quaternary structure, homotrimer. The cofactor is Mg(2+).

It localises to the cytoplasm. It catalyses the reaction alpha-D-glucosamine 1-phosphate + acetyl-CoA = N-acetyl-alpha-D-glucosamine 1-phosphate + CoA + H(+). The enzyme catalyses N-acetyl-alpha-D-glucosamine 1-phosphate + UTP + H(+) = UDP-N-acetyl-alpha-D-glucosamine + diphosphate. It functions in the pathway nucleotide-sugar biosynthesis; UDP-N-acetyl-alpha-D-glucosamine biosynthesis; N-acetyl-alpha-D-glucosamine 1-phosphate from alpha-D-glucosamine 6-phosphate (route II): step 2/2. It participates in nucleotide-sugar biosynthesis; UDP-N-acetyl-alpha-D-glucosamine biosynthesis; UDP-N-acetyl-alpha-D-glucosamine from N-acetyl-alpha-D-glucosamine 1-phosphate: step 1/1. The protein operates within bacterial outer membrane biogenesis; LPS lipid A biosynthesis. In terms of biological role, catalyzes the last two sequential reactions in the de novo biosynthetic pathway for UDP-N-acetylglucosamine (UDP-GlcNAc). The C-terminal domain catalyzes the transfer of acetyl group from acetyl coenzyme A to glucosamine-1-phosphate (GlcN-1-P) to produce N-acetylglucosamine-1-phosphate (GlcNAc-1-P), which is converted into UDP-GlcNAc by the transfer of uridine 5-monophosphate (from uridine 5-triphosphate), a reaction catalyzed by the N-terminal domain. The protein is Bifunctional protein GlmU of Prochlorococcus marinus (strain NATL2A).